The chain runs to 375 residues: GDSL esterase/lipase At5g45960 (375 aa).

The first 28 residues, 1–28, serve as a signal peptide directing secretion; it reads MRSHHRHFSSYVSFILFLFLFFISFSSS. S54 functions as the Nucleophile in the catalytic mechanism. An N-linked (GlcNAc...) asparagine glycan is attached at N340. Catalysis depends on residues D348 and H351.

The protein belongs to the 'GDSL' lipolytic enzyme family.

Its subcellular location is the secreted. This Arabidopsis thaliana (Mouse-ear cress) protein is GDSL esterase/lipase At5g45960.